The primary structure comprises 412 residues: Imidazolonepropionase (412 aa).

Residues His76 and His78 each contribute to the Fe(3+) site. His76 and His78 together coordinate Zn(2+). The 4-imidazolone-5-propanoate site is built by Arg85, Tyr148, and His181. Residue Tyr148 participates in N-formimidoyl-L-glutamate binding. His242 lines the Fe(3+) pocket. His242 provides a ligand contact to Zn(2+). Position 245 (Glu245) interacts with 4-imidazolone-5-propanoate. Asp317 is a Fe(3+) binding site. Asp317 is a binding site for Zn(2+). Residues Asn319 and Gly321 each contribute to the N-formimidoyl-L-glutamate site. Ser322 contributes to the 4-imidazolone-5-propanoate binding site.

It belongs to the metallo-dependent hydrolases superfamily. HutI family. It depends on Zn(2+) as a cofactor. The cofactor is Fe(3+).

The protein resides in the cytoplasm. It carries out the reaction 4-imidazolone-5-propanoate + H2O = N-formimidoyl-L-glutamate. Its pathway is amino-acid degradation; L-histidine degradation into L-glutamate; N-formimidoyl-L-glutamate from L-histidine: step 3/3. Functionally, catalyzes the hydrolytic cleavage of the carbon-nitrogen bond in imidazolone-5-propanoate to yield N-formimidoyl-L-glutamate. It is the third step in the universal histidine degradation pathway. The sequence is that of Imidazolonepropionase from Staphylococcus aureus (strain Mu50 / ATCC 700699).